Reading from the N-terminus, the 498-residue chain is Cytochrome P450 monooxygenase aflU (498 aa).

Residues 5–27 (TVYTSLIGLLVALTVRSIYRVYF) traverse the membrane as a helical segment. 2 N-linked (GlcNAc...) asparagine glycosylation sites follow: Asn-259 and Asn-354. Cys-438 lines the heme pocket.

Belongs to the cytochrome P450 family. Requires heme as cofactor.

The protein localises to the membrane. It participates in mycotoxin biosynthesis; aflatoxin biosynthesis. Its function is as follows. Cytochrome P450 monooxygenase; part of the gene cluster that mediates the biosynthesis of aflatoxins, a group of polyketide-derived furanocoumarins, and part of the most toxic and carcinogenic compounds among the known mycotoxins. The four major aflatoxins produced by A.parasiticus are aflatoxin B1 (AFB1), aflatoxin B2 (AFB2), aflatoxin G1 (AFG1) and aflatoxin G2 (AFG2). Within the aflatoxin pathway, the cytochrome P450 monooxygenase aflU is involved in the last steps in which OMST is converted to aflatoxins B1 and G1, and DHOMST to aflatoxins B2 and G2. The biosynthesis of aflatoxins begins with the norsolorinic acid synthase aflC that combines a hexanoyl starter unit produced by the fatty acid synthase aflA/aflB and 7 malonyl-CoA extender units to synthesize the precursor NOR. The second step is the conversion of NOR to averantin and requires the norsolorinic acid ketoreductase aflD, which catalyzes the dehydration of norsolorinic acid to form (1'S)-averantin. The norsolorinic acid reductases aflE and aflF may also play a role in the conversion of NOR to AVN. The cytochrome P450 monooxygenase aflG then catalyzes the hydroxylation of AVN to 5'hydroxyaverantin (HAVN). The next step is performed by the 5'-hydroxyaverantin dehydrogenase aflH that transforms HAVN to 5'-oxoaverantin (OAVN) which is further converted to averufin (AVF) by aflK that plays a dual role in the pathway, as a 5'-oxoaverantin cyclase that mediates conversion of 5'-oxoaverantin, as well as a versicolorin B synthase in a later step in the pathway. The averufin oxidase aflI catalyzes the conversion of AVF to versiconal hemiacetal acetate (VHA). VHA is then the substrate for the versiconal hemiacetal acetate esterase aflJ to yield versiconal (VAL). Versicolorin B synthase aflK then converts VAL to versicolorin B (VERB) by closing the bisfuran ring of aflatoxin which is required for DNA-binding, thus giving to aflatoxin its activity as a mutagen. Then, the activity of the versicolorin B desaturase aflL leads to versicolorin A (VERA). A branch point starts from VERB since it can also be converted to dihydrodemethylsterigmatocystin (DMDHST), probably also by aflL, VERA being a precursor for aflatoxins B1 and G1, and DMDHST for aflatoxins B2 and G2. Next, the versicolorin reductase aflM and the cytochrome P450 monooxygenase aflN are involved in conversion of VERA to demethylsterigmatocystin (DMST). AflX and aflY seem also involved in this step, through probable aflX-mediated epoxide ring-opening step following versicolorin A oxidation and aflY-mediated Baeyer-Villiger oxidation required for the formation of the xanthone ring. The methyltransferase aflO then leads to the modification of DMST to sterigmatocystin (ST), and of DMDHST to dihydrosterigmatocystin (DHST). Both ST and DHST are then substrates of the O-methyltransferase aflP to yield O-methylsterigmatocystin (OMST) and dihydro-O-methylsterigmatocystin (DHOMST), respectively. Finally OMST is converted to aflatoxins B1 and G1, and DHOMST to aflatoxins B2 and G2, via the action of several enzymes including O-methylsterigmatocystin oxidoreductase aflQ, the cytochrome P450 monooxygenase aflU, but also the NADH-dependent flavin oxidoreductase nadA which is specifically required for the synthesis of AFG1. The polypeptide is Cytochrome P450 monooxygenase aflU (Aspergillus parasiticus (strain ATCC 56775 / NRRL 5862 / SRRC 143 / SU-1)).